We begin with the raw amino-acid sequence, 552 residues long: uncharacterized protein (552 aa).

This is an uncharacterized protein from Bacillus subtilis (strain 168).